Consider the following 154-residue polypeptide: Myoglobin (154 aa).

A Globin domain is found at 2–148; that stretch reads GLSDGEWQLV…FRNDMAAKYK (147 aa). Residue Ser-4 is modified to Phosphoserine. His-65 is a binding site for nitrite. An O2-binding site is contributed by His-65. Phosphothreonine is present on Thr-68. Residue His-94 coordinates heme b.

It belongs to the globin family. Monomeric.

It is found in the cytoplasm. Its subcellular location is the sarcoplasm. The enzyme catalyses Fe(III)-heme b-[protein] + nitric oxide + H2O = Fe(II)-heme b-[protein] + nitrite + 2 H(+). The catalysed reaction is H2O2 + AH2 = A + 2 H2O. Monomeric heme protein which primary function is to store oxygen and facilitate its diffusion within muscle tissues. Reversibly binds oxygen through a pentacoordinated heme iron and enables its timely and efficient release as needed during periods of heightened demand. Depending on the oxidative conditions of tissues and cells, and in addition to its ability to bind oxygen, it also has a nitrite reductase activity whereby it regulates the production of bioactive nitric oxide. Under stress conditions, like hypoxia and anoxia, it also protects cells against reactive oxygen species thanks to its pseudoperoxidase activity. The polypeptide is Myoglobin (MB) (Ochotona princeps (Southern American pika)).